Reading from the N-terminus, the 367-residue chain is Protein RIC-3 (367 aa).

A signal peptide spans 1 to 31; that stretch reads MAYSTVQRVALASGLVLAVSLLLPKAFLSRG. Residues 30–67 are disordered; it reads RGKRPEPPPGPEGKLDRFPPMMHHHSAPSDGQTPGARF. Topologically, residues 32 to 95 are lumenal; it reads KRPEPPPGPE…AGGGGSGRGL (64 aa). The chain crosses the membrane as a helical span at residues 96–116; that stretch reads MGQIIPIYGFGIFLYILYILF. Over 117 to 367 the chain is Cytoplasmic; the sequence is KLSKGKTAED…LRKRNPQGFE (251 aa). Positions 138–169 form a coiled coil; sequence HRKITNFELVQLQEKLKETEEAMEKLINRVGP. Residue lysine 201 is modified to N6-acetyllysine; alternate. Lysine 201 participates in a covalent cross-link: Glycyl lysine isopeptide (Lys-Gly) (interchain with G-Cter in ubiquitin); alternate. Disordered regions lie at residues 262-301 and 322-367; these read QMGE…PESC and ADGY…QGFE. Positions 271–280 are enriched in basic and acidic residues; it reads SERLSWDHLP. Over residues 358 to 367 the composition is skewed to basic residues; that stretch reads LRKRNPQGFE.

The protein belongs to the ric-3 family. Monomer and homodimer. Interacts with CHRNA7, CHRNA3, CHRNA4, CHRNB2, CHRNB4 and HTR3A. In terms of tissue distribution, expressed in brain, with highest levels in hippocampus, cerebellum and superior colliculus.

The protein localises to the endoplasmic reticulum membrane. Functionally, molecular chaperone which promotes the proper subunit assembly and surface trafficking of alpha-7 (CHRNA7) nicotinic acetylcholine receptor. Promotes the proper subunit assembly and cell surface expression of alpha-8 (CHRNA8) nicotinic acetylcholine receptor. May also promote functional expression of homomeric serotoninergic 5-HT3 receptors, and of heteromeric acetylcholine receptors alpha-3/beta-2, alpha-3/beta-4, alpha-4/beta-2 and alpha-4/beta-4. The sequence is that of Protein RIC-3 (Ric3) from Mus musculus (Mouse).